The primary structure comprises 185 residues: UPF0200 protein TON_1344 (185 aa).

7-14 provides a ligand contact to ATP; sequence GMPGSGKS.

It belongs to the UPF0200 family.

The polypeptide is UPF0200 protein TON_1344 (Thermococcus onnurineus (strain NA1)).